The chain runs to 341 residues: Two-component response regulator ORR30 (341 aa).

The 116-residue stretch at 12 to 127 (RVLVIDDDCS…ELSNIWQHIF (116 aa)) folds into the Response regulatory domain. Residue aspartate 63 is modified to 4-aspartylphosphate. Residues 195 to 254 (DLGKSRLTWTTQLHRQFIAAVNHLGEDKAVPKKILGIMKVKHLTREQVASHLQKYRMQLK) form the HTH myb-type domain. Positions 225–250 (PKKILGIMKVKHLTREQVASHLQKYR) form a DNA-binding region, H-T-H motif.

The protein belongs to the ARR family. Type-B subfamily. Two-component system major event consists of a His-to-Asp phosphorelay between a sensor histidine kinase (HK) and a response regulator (RR). In plants, the His-to-Asp phosphorelay involves an additional intermediate named Histidine-containing phosphotransfer protein (HPt). This multistep phosphorelay consists of a His-Asp-His-Asp sequential transfer of a phosphate group between first a His and an Asp of the HK protein, followed by the transfer to a conserved His of the HPt protein and finally the transfer to an Asp in the receiver domain of the RR protein.

Its subcellular location is the nucleus. Transcriptional activator that acts as a floral inducer to promote short-day (SD) flowering pathway. Activates HD3A and other FT-like genes independently from HD1. May also activate MADS-box transcription factors involved in flowering regulation. Functions as a response regulator involved in His-to-Asp phosphorelay signal transduction system. Phosphorylation of the Asp residue in the receiver domain activates the ability of the protein to promote the transcription of target genes. May directly activate some type-A response regulators in response to cytokinins. This Oryza sativa subsp. japonica (Rice) protein is Two-component response regulator ORR30.